The following is a 140-amino-acid chain: Transcription antitermination protein NusB (140 aa).

It belongs to the NusB family.

Its function is as follows. Involved in transcription antitermination. Required for transcription of ribosomal RNA (rRNA) genes. Binds specifically to the boxA antiterminator sequence of the ribosomal RNA (rrn) operons. The polypeptide is Transcription antitermination protein NusB (Thermoanaerobacter pseudethanolicus (strain ATCC 33223 / 39E) (Clostridium thermohydrosulfuricum)).